The following is a 421-amino-acid chain: Synaptotagmin-1 (421 aa).

The Vesicular portion of the chain corresponds to 1 to 57 (MVSASHPEALAAPVTTVATLVPHNATEPASPGEGKEDAFSKLKQKFMNELHKIPLPP). An N-linked (GlcNAc...) asparagine glycan is attached at Asn-24. A helical membrane pass occupies residues 58-79 (WALIAIAIVAVLLVVTCCFCVC). Residues Cys-74, Cys-75, Cys-77, Cys-79, and Cys-82 are each lipidated (S-palmitoyl cysteine). Residues 80–421 (KKCLFKKKNK…EVDAMLAVKK (342 aa)) are Cytoplasmic-facing. The segment at 112 to 141 (TMKDQALKDDDAETGLTDGEEKEEPKEEEK) is disordered. The segment covering 121–133 (DDAETGLTDGEEK) has biased composition (acidic residues). Residue Thr-128 is modified to Phosphothreonine. The tract at residues 135-381 (EPKEEEKLGK…AIGKVFVGYN (247 aa)) is phospholipid binding. A C2 1 domain is found at 141–260 (KLGKLQYSLD…DFGHVTEEWR (120 aa)). Residues Leu-171, Asp-172, and Asp-178 each contribute to the Ca(2+) site. Position 229 is a phosphotyrosine (Tyr-229). 6 residues coordinate Ca(2+): Asp-230, Phe-231, Asp-232, Ser-235, Lys-236, and Asp-238. Phosphoserine is present on Ser-264. Residues 272 to 405 (KLGDICFSLR…NPRRPIAQWH (134 aa)) form the C2 2 domain. Ca(2+) is bound by residues Asp-303 and Asp-309. Residues Ser-342 and Ser-344 each carry the phosphoserine modification. Asp-363, Asp-365, and Asp-371 together coordinate Ca(2+).

It belongs to the synaptotagmin family. In terms of assembly, homotetramer. Heterodimer; heterodimerizes with SYT2 in presence of calcium. Interacts with SCAMP5. Interacts with STON2. Forms a complex with SV2B, syntaxin 1 and SNAP25. Interacts with SV2A, SV2B and SV2C. Interacts with RIMS1. Interacts with PRRT2. Interacts with DNAJC5 in a phosphorylation-dependent manner. Interacts (via N-terminus) with RAB3A. Interacts with SYT12. Interacts with calmodulin. Interacts with DNM1 (via C-terminal proline-rich domain (PRD)); this interaction facilitates vesicle fission during clathrin-mediated endocytosis (CME). As to quaternary structure, (Microbial infection) Interacts with C.botulinum neurotoxin type B (BoNT/B, botB). Has lower affinity for BoNT/B than Syt2; mutating its residues to match those in Syt2 increases its affinity. (Microbial infection) Interacts with C.botulinum neurotoxin type G (BoNT/G, botG). Ca(2+) is required as a cofactor. In terms of processing, glycosylated. Expressed in the brain (at protein level). Predominantly expressed in rostral, phylogenetically younger brain regions, and in some endocrine tissues.

The protein localises to the cytoplasmic vesicle. Its subcellular location is the secretory vesicle membrane. The protein resides in the secretory vesicle. It is found in the synaptic vesicle membrane. It localises to the chromaffin granule membrane. The protein localises to the cytoplasm. Functionally, calcium sensor that participates in triggering neurotransmitter release at the synapse. May have a regulatory role in the membrane interactions during trafficking of synaptic vesicles at the active zone of the synapse. It binds acidic phospholipids with a specificity that requires the presence of both an acidic head group and a diacyl backbone. A Ca(2+)-dependent interaction between synaptotagmin and putative receptors for activated protein kinase C has also been reported. It can bind to at least three additional proteins in a Ca(2+)-independent manner; these are neurexins, syntaxin and AP2. Plays a role in dendrite formation by melanocytes. (Microbial infection) Receptor for C.botulinum neurotoxin type B (BoNT/B, botB); interaction is improved in the presence of gangliosides. BoNT/B toxin binds to the membrane proximal vesicular domain of Syt1 (residues 32-51). Its function is as follows. (Microbial infection) Receptor for C.botulinum neurotoxin type G (BoNT/G, botG); unlike the case with BoNT/B, interaction is not improved in the presence of gangliosides. BoNT/G toxin binds to the vesicular domain of Syt1 (residues 32-53). In Rattus norvegicus (Rat), this protein is Synaptotagmin-1.